The chain runs to 274 residues: 2,3,4,5-tetrahydropyridine-2,6-dicarboxylate N-succinyltransferase (274 aa).

The substrate site is built by Arg104 and Asp141.

This sequence belongs to the transferase hexapeptide repeat family. In terms of assembly, homotrimer.

It is found in the cytoplasm. It catalyses the reaction (S)-2,3,4,5-tetrahydrodipicolinate + succinyl-CoA + H2O = (S)-2-succinylamino-6-oxoheptanedioate + CoA. It participates in amino-acid biosynthesis; L-lysine biosynthesis via DAP pathway; LL-2,6-diaminopimelate from (S)-tetrahydrodipicolinate (succinylase route): step 1/3. This chain is 2,3,4,5-tetrahydropyridine-2,6-dicarboxylate N-succinyltransferase, found in Enterobacter sp. (strain 638).